The following is an 89-amino-acid chain: Small ribosomal subunit protein uS14 (89 aa).

It belongs to the universal ribosomal protein uS14 family. In terms of assembly, part of the 30S ribosomal subunit. Contacts proteins S3 and S10.

Its function is as follows. Binds 16S rRNA, required for the assembly of 30S particles and may also be responsible for determining the conformation of the 16S rRNA at the A site. This chain is Small ribosomal subunit protein uS14, found in Leuconostoc citreum (strain KM20).